Here is a 703-residue protein sequence, read N- to C-terminus: Lethal(3)malignant brain tumor-like protein 2 (703 aa).

Residues Met-1–His-70 are disordered. Ser-13 bears the Phosphoserine mark. The segment covering Pro-15 to Glu-25 has biased composition (acidic residues). Low complexity predominate over residues Ser-35–Glu-49. Residues Glu-50–Glu-60 are compositionally biased toward acidic residues. Residue Ser-67 is modified to Phosphoserine. Residues Asp-81–Arg-116 form an FCS-type zinc finger. 4 residues coordinate Zn(2+): Cys-90, Cys-93, Cys-110, and Cys-114. MBT repeat units follow at residues Phe-179 to Pro-283, Thr-291 to Ser-391, Met-397 to Pro-500, and Phe-508 to Pro-604. At Ser-338 the chain carries Phosphoserine. Lys-405 participates in a covalent cross-link: Glycyl lysine isopeptide (Lys-Gly) (interchain with G-Cter in SUMO2). Disordered regions lie at residues Pro-604 to Leu-649 and Val-672 to Ser-703. Residues Thr-619–Pro-634 show a composition bias toward basic residues. Residues Lys-647 and Lys-673 each participate in a glycyl lysine isopeptide (Lys-Gly) (interchain with G-Cter in SUMO2) cross-link. Phosphoserine occurs at positions 681, 685, and 687. Residue Lys-698 forms a Glycyl lysine isopeptide (Lys-Gly) (interchain with G-Cter in SUMO1); alternate linkage. A Glycyl lysine isopeptide (Lys-Gly) (interchain with G-Cter in SUMO2); alternate cross-link involves residue Lys-698.

Part of the E2F6.com-1 complex in G0 phase composed of E2F6, MGA, MAX, TFDP1, CBX3, BAT8, EUHMTASE1, RING1, RNF2, MBLR, BAT8 and YAF2.

The protein resides in the nucleus. Functionally, putative Polycomb group (PcG) protein. PcG proteins maintain the transcriptionally repressive state of genes, probably via a modification of chromatin, rendering it heritably changed in its expressibility. Its association with a chromatin-remodeling complex suggests that it may contribute to prevent expression of genes that trigger the cell into mitosis. Binds to monomethylated and dimethylated 'Lys-20' on histone H4. Binds histone H3 peptides that are monomethylated or dimethylated on 'Lys-4', 'Lys-9' or 'Lys-27'. The protein is Lethal(3)malignant brain tumor-like protein 2 (L3mbtl2) of Rattus norvegicus (Rat).